Consider the following 214-residue polypeptide: uncharacterized protein (214 aa).

4 helical membrane passes run 43–63 (IQKP…AAHI), 84–104 (IEWA…IPVI), 116–136 (ALVI…EYFI), and 150–170 (PVTR…FGIF).

It is found in the host membrane. This is an uncharacterized protein from Citrus leprosis virus C (isolate Citrus sinesis/Brazil/Cordeiropolis/2003) (CiLV-C).